The sequence spans 390 residues: MANITTKETPKITPDLLKNPYQKIINASASVFDEKHGRSFFSPQFYEKIEPYLKEVLTHPIDLECDLNTAKKKNRLTPLKQLFKACFNTEEILIVNNNTSAVFLIANALAQEKEIVVSYGELVGGDFNLKDILLSSGARLHLVGNTSRTYLRDYRLALNENSKMLFKTHNPAFKKDTPFKDLQALAKEHDLIDYYNLGDVDLLDRTALEEVLALKPSLLSFSADKSFNSVQAGIIMGQKEWVETLKNHPLYRALRVDKITLTLLFHSLNAWVNHQEEITIHALLHQTKDALLQKALKLYALLKPLELNVSIASSFSKIGNLFGRELESFCVKIQSKNTRALNGEKLYLRLFQKGVITRISCEFVCFEVFSLNEKDFEKIALVLEEILNKA.

Lys-225 is subject to N6-(pyridoxal phosphate)lysine.

This sequence belongs to the SelA family. Pyridoxal 5'-phosphate is required as a cofactor.

It is found in the cytoplasm. The catalysed reaction is L-seryl-tRNA(Sec) + selenophosphate + H(+) = L-selenocysteinyl-tRNA(Sec) + phosphate. The protein operates within aminoacyl-tRNA biosynthesis; selenocysteinyl-tRNA(Sec) biosynthesis; selenocysteinyl-tRNA(Sec) from L-seryl-tRNA(Sec) (bacterial route): step 1/1. In terms of biological role, converts seryl-tRNA(Sec) to selenocysteinyl-tRNA(Sec) required for selenoprotein biosynthesis. The chain is L-seryl-tRNA(Sec) selenium transferase from Helicobacter pylori (strain P12).